The following is a 166-amino-acid chain: Phosphopantetheine adenylyltransferase (166 aa).

Substrate is bound at residue S11. Residues 11 to 12 (SF) and H19 each bind ATP. Residues K43, L75, and R89 each contribute to the substrate site. ATP is bound by residues 90-92 (GLR), E100, and 125-131 (YGYLSSS).

This sequence belongs to the bacterial CoaD family. In terms of assembly, homohexamer. It depends on Mg(2+) as a cofactor.

Its subcellular location is the cytoplasm. The catalysed reaction is (R)-4'-phosphopantetheine + ATP + H(+) = 3'-dephospho-CoA + diphosphate. It functions in the pathway cofactor biosynthesis; coenzyme A biosynthesis; CoA from (R)-pantothenate: step 4/5. Functionally, reversibly transfers an adenylyl group from ATP to 4'-phosphopantetheine, yielding dephospho-CoA (dPCoA) and pyrophosphate. The sequence is that of Phosphopantetheine adenylyltransferase from Syntrophotalea carbinolica (strain DSM 2380 / NBRC 103641 / GraBd1) (Pelobacter carbinolicus).